The following is a 128-amino-acid chain: Arginine decarboxylase proenzyme (128 aa).

Catalysis depends on serine 76, which acts as the Schiff-base intermediate with substrate; via pyruvic acid. Serine 76 carries the post-translational modification Pyruvic acid (Ser); by autocatalysis. The active-site Proton acceptor; for processing activity is histidine 81. The active-site Proton donor; for catalytic activity is the cysteine 96.

This sequence belongs to the prokaryotic AdoMetDC family. Type 1 subfamily. Heterooctamer of four alpha and four beta chains arranged as a tetramer of alpha/beta heterodimers. Requires pyruvate as cofactor. Post-translationally, is synthesized initially as an inactive proenzyme. Formation of the active enzyme involves a self-maturation process in which the active site pyruvoyl group is generated from an internal serine residue via an autocatalytic post-translational modification. Two non-identical subunits are generated from the proenzyme in this reaction, and the pyruvate is formed at the N-terminus of the alpha chain, which is derived from the carboxyl end of the proenzyme. The post-translation cleavage follows an unusual pathway, termed non-hydrolytic serinolysis, in which the side chain hydroxyl group of the serine supplies its oxygen atom to form the C-terminus of the beta chain, while the remainder of the serine residue undergoes an oxidative deamination to produce ammonia and the pyruvoyl group blocking the N-terminus of the alpha chain.

It carries out the reaction L-arginine + H(+) = agmatine + CO2. The protein operates within amine and polyamine biosynthesis; agmatine biosynthesis; agmatine from L-arginine: step 1/1. Specifically catalyzes the decarboxylation of L-arginine to agmatine. Has no S-adenosylmethionine decarboxylase (AdoMetDC) activity. This is Arginine decarboxylase proenzyme from Sulfurisphaera tokodaii (strain DSM 16993 / JCM 10545 / NBRC 100140 / 7) (Sulfolobus tokodaii).